The following is a 363-amino-acid chain: Putative serine/threonine-protein kinase gskl-1 (363 aa).

The region spanning 20–304 is the Protein kinase domain; sequence FGAHKLCGSG…AIDVLKMPLF (285 aa). Residues 26 to 34 and lysine 50 each bind ATP; that span reads CGSGRFSNV. Aspartate 146 serves as the catalytic Proton acceptor. The segment at 311–363 is disordered; sequence PPKKRSNGVEMPNLASYTEMHHKREPETEVVADIQTTEKAEKESDSTNEELED. Over residues 346-355 the composition is skewed to basic and acidic residues; the sequence is TTEKAEKESD.

This sequence belongs to the protein kinase superfamily. Ser/Thr protein kinase family. As to expression, expressed during multiple stages of spermatogenesis, in males and hermaphrodites (at protein level).

It is found in the cytoplasm. Its subcellular location is the cell projection. It localises to the pseudopodium. The enzyme catalyses L-seryl-[protein] + ATP = O-phospho-L-seryl-[protein] + ADP + H(+). The catalysed reaction is L-threonyl-[protein] + ATP = O-phospho-L-threonyl-[protein] + ADP + H(+). Its function is as follows. May be an autophosphorylating tyrosine kinase, a bifunctional (serine/tyrosine-specific) protein kinase, or a serine kinase that is a substrate for an associated tyrosine kinase. Acting in concert with putative serine/threonine-protein kinase gskl-2, required for sister chromatid segregation and spermatid budding during male meiosis. Plays a role in regulating female meiosis II, together with gskl-2. Involved in sperm pseudopod formation and function, together with gskl-2. This chain is Putative serine/threonine-protein kinase gskl-1, found in Caenorhabditis elegans.